Reading from the N-terminus, the 133-residue chain is MDKKTIYFICSGNSCRSQMAEGWGKEILGEDWNVYSAGIETHGVNPKAIEAMKEVDIDISNHTSDLIDSDILEQSDLVVTLCSDADDNCPILPPNVKKEHWGFDDPAGKEWPEFQRVRDEIGKRIQEFKETLV.

Active-site nucleophile residues include C10, C82, and C89. 2 disulfides stabilise this stretch: C10/C82 and C82/C89.

The protein belongs to the low molecular weight phosphotyrosine protein phosphatase family. Thioredoxin-coupled ArsC subfamily.

It localises to the cytoplasm. It carries out the reaction arsenate + [thioredoxin]-dithiol + H(+) = arsenite + [thioredoxin]-disulfide + H2O. Functionally, catalyzes the reduction of arsenate [As(V)] to arsenite [As(III)]. The chain is Arsenate reductase 1 from Staphylococcus haemolyticus (strain JCSC1435).